The primary structure comprises 588 residues: D-3-phosphoglycerate dehydrogenase 3, chloroplastic (588 aa).

A chloroplast-targeting transit peptide spans 1-38; sequence MATSLNLSSIFSSSSRLVTTPSSVFPIRQRRRIILVTS. NAD(+)-binding positions include 195–196, Asp-215, 274–276, and Asp-300; these read KV and VAR. The active site involves Arg-276. The active site involves Glu-305. His-324 (proton donor) is an active-site residue. 324–327 lines the NAD(+) pocket; the sequence is HLGA. Residues 516–588 enclose the ACT domain; sequence VILCRQVDQP…AIEEFVFLKL (73 aa).

This sequence belongs to the D-isomer specific 2-hydroxyacid dehydrogenase family. In terms of tissue distribution, expressed in aerial parts. Not detected in roots and meristematic tissue. Expressed in cotyledons, adult leaves, stigma and anther filaments. Detected in the embryo.

The protein localises to the plastid. It localises to the chloroplast. The enzyme catalyses (2R)-3-phosphoglycerate + NAD(+) = 3-phosphooxypyruvate + NADH + H(+). It functions in the pathway amino-acid biosynthesis; L-serine biosynthesis; L-serine from 3-phospho-D-glycerate: step 1/3. Partially inhibited by 1 mM serine. Its function is as follows. Involved in the plastidial phosphorylated pathway of serine biosynthesis (PPSB). In Arabidopsis thaliana (Mouse-ear cress), this protein is D-3-phosphoglycerate dehydrogenase 3, chloroplastic (PGDH3).